Here is a 71-residue protein sequence, read N- to C-terminus: Permeability factor 2 (71 aa).

Intrachain disulfides connect Cys7–Cys33 and Cys9–Cys49.

It belongs to the intercrine alpha (chemokine CxC) family. As to quaternary structure, homodimer.

It localises to the secreted. In terms of biological role, has chemotactic activity for neutrophils. This is Permeability factor 2 from Oryctolagus cuniculus (Rabbit).